The sequence spans 849 residues: Dopamine receptor 2 (849 aa).

Residues 1–39 lie on the Extracellular side of the membrane; that stretch reads MEAGETWNVSLEWPPPSLDLSTITQTPSTIVGSGIPLNY. N-linked (GlcNAc...) asparagine glycosylation is present at asparagine 8. The chain crosses the membrane as a helical span at residues 40–60; it reads AGLSLIVIPLITLLGNLLVII. At 61 to 70 the chain is on the cytoplasmic side; it reads SVLRYRALQS. The chain crosses the membrane as a helical span at residues 71–91; that stretch reads AINFLILGLAVADLLVAIIVM. Topologically, residues 92–112 are extracellular; it reads PYAVYVYVTNGDWYLGNLMCD. A disulfide bridge links cysteine 111 with cysteine 190. Residues 113–133 traverse the membrane as a helical segment; that stretch reads IYMASDVCCSTASILLLAVIS. The Cytoplasmic segment spans residues 134–155; the sequence is FDRYRAVSLPIQYSRQSQNVKR. A helical transmembrane segment spans residues 156–176; sequence VWTLIAVIWLVSLTLASPMVF. Topologically, residues 177-203 are extracellular; the sequence is GVNVRPPDANPYECRFYNAEFSILSSM. The interval 183–849 is required for the interaction with gpa-14; sequence PDANPYECRF…HHFSNKQAHV (667 aa). A helical transmembrane segment spans residues 204 to 224; that stretch reads ISFVIPCFLVLFVYIRIIIAL. Over 225 to 759 the chain is Cytoplasmic; the sequence is KKREKAAKMR…QRKEKRATKT (535 aa). Residues 450-515 are disordered; it reads RRSSYADDSQ…NNSRTASITN (66 aa). Residues 457 to 470 show a composition bias toward low complexity; that stretch reads DSQPTSSQTSSGDG. Residues 477 to 498 show a composition bias toward basic residues; it reads GQKRFRNLSRNYSTKHHRKVVK. The segment covering 501 to 515 has biased composition (polar residues); it reads RGNSRNNSRTASITN. A helical transmembrane segment spans residues 760–780; the sequence is LGVVVGVFLVCWVPFFVINIL. The Extracellular segment spans residues 781-798; sequence NAVCILLNKDSCQVGYDL. The helical transmembrane segment at 799 to 819 threads the bilayer; sequence FFYCTWIGYMNSFMNPIIYTI. Residues 820–849 lie on the Cytoplasmic side of the membrane; the sequence is FNTEFRRAFKSIIFGRNSTRHHFSNKQAHV.

This sequence belongs to the G-protein coupled receptor 1 family. As to quaternary structure, interacts (via C-terminus) with the G-alpha protein gpa-14; the interaction is direct. Expressed in all dopaminergic neurons. Expressed in neurons around the nerve ring and the posterior side of the body including PDE neurons. In hermaphrodites, expressed in the head and tail ganglia including in the RIA interneuron pair, and in a subset of sublateral interneurons and the PDA neuron in the tail. Expressed in cholinergic SIA neurons. Also expressed in the male tail. In males, expressed in the dorsal spicule protractor, ventral spicule protractor, dorsal spicule retractor and ventral spicule retractor muscles and the sensory post-cloacal sensilla B (PCB) neuron. In males, expressed in the sensory hook neurons HOA.

The protein resides in the cell membrane. In terms of biological role, G-protein coupled receptor which binds to the neurotransmitter dopamine with high affinity leading to the activation of an associated G-protein and downstream signaling pathways. Couples to G-proteins to inhibit adenylate cyclase (AC) activity and cAMP production. Inhibits synaptic vesicle fusion to negatively regulate the release of dopamine at dopaminergic neuron synapses. Antagonizes octopamine signaling in response to food by promoting the dopamine-mediated suppression of crh-1/CREB1 transcription factor activation in cholinergic SIA neurons. This is most likely in association with the G(o)-alpha G-protein subunit goa-1. In association with the G-alpha protein gpa-14, modulates two types of learning behavior: touch habituation and chemosensory associative conditioning. May act partly via tsp-17 to negatively regulate dopamine reuptake transporter dat-1 activity. Plays a role in behavioral plasticity and regulates the decision-making process when conflicting alternatives are present. Promotes male mating behavior by antagonizing acetylcholine signaling to control the protrusions of copulatory spicules from the tail of males during hermaphrodite vulval location. Modulates unc-7 activity at gap junctions to promote inhibitory neuronal signaling transduction between chemosensory and mechanosensory neurons, and thus ensures spicule insertion attempts are confined to the hermaphrodite vulva during copulation. Functionally, G-protein coupled receptor which binds to the neurotransmitter dopamine with high affinity leading to the activation of an associated G-protein and downstream signaling pathways. Couples to G-proteins to inhibit adenylate cyclase (AC) activity and cAMP production. The sequence is that of Dopamine receptor 2 from Caenorhabditis elegans.